We begin with the raw amino-acid sequence, 210 residues long: Probable GTP-binding protein EngB (210 aa).

Positions 29–203 (NGIEIAFAGR…SNKLDSWFAP (175 aa)) constitute an EngB-type G domain. GTP is bound by residues 37–44 (GRSNAGKS), 64–68 (GRTQL), 82–85 (DLPG), 149–152 (TKAD), and 181–184 (IYSA). The Mg(2+) site is built by Ser44 and Thr66.

The protein belongs to the TRAFAC class TrmE-Era-EngA-EngB-Septin-like GTPase superfamily. EngB GTPase family. The cofactor is Mg(2+).

Functionally, necessary for normal cell division and for the maintenance of normal septation. The chain is Probable GTP-binding protein EngB from Haemophilus ducreyi (strain 35000HP / ATCC 700724).